Reading from the N-terminus, the 262-residue chain is KTSTRTRCAFEVAARDQGAGVTYLEPSASQIRHKESIKDTARVLGRMYDGIEYRGFGQDVVEELAKYAGVPVFNGLTNEFHPTQMLADALTMREHSGKPLNQTAFAYVGDARYNMANSLLVLGAKLGMDVRIGAPKTLWPSENIVARARAVAEETGGKILLTENAEEAVKGVDFIHTDVWVSMGEPKEAWQERIDLLKDYRVTPELMAVSGNPQVKFMHCLPAFHNRETKVGEWIYETFGLNGVEVTEEVFESSASIVFDQA.

Residues 3 to 7 (STRTR), Gln30, Arg54, and 81 to 84 (HPTQ) each bind carbamoyl phosphate. Residues Asn114, Asp178, and 182 to 183 (SM) contribute to the L-ornithine site. Carbamoyl phosphate-binding positions include 219 to 222 (HCLP) and Thr247.

Belongs to the aspartate/ornithine carbamoyltransferase superfamily. OTCase family.

It localises to the cytoplasm. It catalyses the reaction carbamoyl phosphate + L-ornithine = L-citrulline + phosphate + H(+). It participates in amino-acid biosynthesis; L-arginine biosynthesis; L-arginine from L-ornithine and carbamoyl phosphate: step 1/3. In terms of biological role, reversibly catalyzes the transfer of the carbamoyl group from carbamoyl phosphate (CP) to the N(epsilon) atom of ornithine (ORN) to produce L-citrulline. This is Ornithine carbamoyltransferase (argF) from Neisseria mucosa.